Here is a 761-residue protein sequence, read N- to C-terminus: uncharacterized protein (761 aa).

Residues methionine 1–cysteine 84 form a CR-type zinc finger. The S1 motif domain occupies glycine 135–isoleucine 200.

This is an uncharacterized protein from Methanocaldococcus jannaschii (strain ATCC 43067 / DSM 2661 / JAL-1 / JCM 10045 / NBRC 100440) (Methanococcus jannaschii).